Reading from the N-terminus, the 180-residue chain is Der GTPase-activating protein YihI (180 aa).

Disordered stretches follow at residues 1–87 (MSRK…MTKQ) and 142–180 (GLLEPEEEEDFTASSAKGSRNDDDLLADFDDINFDDYKG). Over residues 23–32 (NRTESDVEGR) the composition is skewed to basic and acidic residues. A compositionally biased stretch (basic residues) spans 33-43 (LRKRAKKRKGL). Residues 51-68 (EVNEQKKQSSEQNRDPRL) show a composition bias toward basic and acidic residues. Residues 165–180 (DLLADFDDINFDDYKG) show a composition bias toward acidic residues.

The protein belongs to the YihI family. As to quaternary structure, interacts with Der.

A GTPase-activating protein (GAP) that modifies Der/EngA GTPase function. May play a role in ribosome biogenesis. This Vibrio parahaemolyticus serotype O3:K6 (strain RIMD 2210633) protein is Der GTPase-activating protein YihI.